Consider the following 188-residue polypeptide: Elongation factor P (188 aa).

Position 34 is an N6-(3,6-diaminohexanoyl)-5-hydroxylysine (Lys-34).

It belongs to the elongation factor P family. Post-translationally, may be beta-lysylated on the epsilon-amino group of Lys-34 by the combined action of EpmA and EpmB, and then hydroxylated on the C5 position of the same residue by EpmC (if this protein is present). Lysylation is critical for the stimulatory effect of EF-P on peptide-bond formation. The lysylation moiety may extend toward the peptidyltransferase center and stabilize the terminal 3-CCA end of the tRNA. Hydroxylation of the C5 position on Lys-34 may allow additional potential stabilizing hydrogen-bond interactions with the P-tRNA.

The protein resides in the cytoplasm. It functions in the pathway protein biosynthesis; polypeptide chain elongation. Functionally, involved in peptide bond synthesis. Alleviates ribosome stalling that occurs when 3 or more consecutive Pro residues or the sequence PPG is present in a protein, possibly by augmenting the peptidyl transferase activity of the ribosome. Modification of Lys-34 is required for alleviation. The sequence is that of Elongation factor P from Vibrio atlanticus (strain LGP32) (Vibrio splendidus (strain Mel32)).